We begin with the raw amino-acid sequence, 397 residues long: Putative 3'(2'),5'-bisphosphate nucleotidase, mitochondrial (397 aa).

The N-terminal 16 residues, 1-16 (MYILDTGARFSAVRFS), are a transit peptide targeting the mitochondrion. Catalysis depends on Asp91, which acts as the Proton acceptor. Mg(2+) is bound by residues Glu114, Asp174, Ile176, and Asp177. Thr179 (proton acceptor) is an active-site residue. The adenosine 3',5'-bisphosphate site is built by Thr179, Ser305, Lys308, and Asp334. Residues Ser305, Lys308, and Asp334 each coordinate AMP. Mg(2+) is bound at residue Asp334.

It belongs to the inositol monophosphatase superfamily. Requires Mg(2+) as cofactor.

It is found in the mitochondrion. It carries out the reaction 3'-phosphoadenylyl sulfate + H2O = adenosine 5'-phosphosulfate + phosphate. The catalysed reaction is adenosine 3',5'-bisphosphate + H2O = AMP + phosphate. It catalyses the reaction adenosine 2',5'-bisphosphate + H2O = AMP + phosphate. Its function is as follows. Phosphatase that converts adenosine 3'-phosphate 5'-phosphosulfate (PAPS) to adenosine 5'-phosphosulfate (APS) and 3'(2')-phosphoadenosine 5'-phosphate (PAP) to AMP. In Arabidopsis thaliana (Mouse-ear cress), this protein is Putative 3'(2'),5'-bisphosphate nucleotidase, mitochondrial.